The sequence spans 844 residues: Beta-mannosidase B (844 aa).

Glu-432 serves as the catalytic Proton donor. N-linked (GlcNAc...) asparagine glycosylation occurs at Asn-723.

It belongs to the glycosyl hydrolase 2 family. Beta-mannosidase B subfamily.

The catalysed reaction is Hydrolysis of terminal, non-reducing beta-D-mannose residues in beta-D-mannosides.. It functions in the pathway glycan metabolism; N-glycan degradation. Its function is as follows. Exoglycosidase that cleaves the single beta-linked mannose residue from the non-reducing end of beta-mannosidic oligosaccharides of various complexity and length. Prefers mannobiose over mannotriose and has no activity against polymeric mannan. Is also severely restricted by galactosyl substitutions at the +1 subsite. The polypeptide is Beta-mannosidase B (mndB) (Aspergillus flavus (strain ATCC 200026 / FGSC A1120 / IAM 13836 / NRRL 3357 / JCM 12722 / SRRC 167)).